The chain runs to 31 residues: Phalloidin proprotein (31 aa).

The propeptide occupies 1-10 (MSDINATRLP). Positions 11-17 (AWLATCP) form a cross-link, cyclopeptide (Ala-Pro). The 2'-cysteinyl-6'-hydroxytryptophan sulfoxide (Trp-Cys) cross-link spans 12 to 16 (WLATC). The propeptide occupies 18–31 (CAGDDVNPLLTRGE).

Belongs to the MSDIN fungal toxin family. In terms of processing, processed by the macrocyclase-peptidase enzyme POPB to yield a toxic cyclic heptapeptide. POPB first removes 10 residues from the N-terminus. Conformational trapping of the remaining peptide forces the enzyme to release this intermediate rather than proceed to macrocyclization. The enzyme rebinds the remaining peptide in a different conformation and catalyzes macrocyclization of the N-terminal 7 residues.

In terms of biological role, major toxin that belongs to the bicyclic heptapeptides called phallotoxins. Although structurally related to amatoxins, phallotoxins have a different mode of action, which is the stabilization of F-actin. Phallotoxins are poisonous when administered parenterally, but not orally because of poor absorption. The chain is Phalloidin proprotein from Amanita ocreata (Western North American destroying angel).